A 236-amino-acid chain; its full sequence is Transcriptional activator protein SolR (236 aa).

The region spanning 169–234 (VPESNAVLTT…QAVVKAIATG (66 aa)) is the HTH luxR-type domain. Residues 193 to 212 (AYEIGQILRISERTVNFHVN) constitute a DNA-binding region (H-T-H motif).

Belongs to the autoinducer-regulated transcriptional regulatory protein family.

The chain is Transcriptional activator protein SolR (solR) from Ralstonia solanacearum (Pseudomonas solanacearum).